The following is a 440-amino-acid chain: MSYFEHIPAIRYEGPQSDNPLAYHHYDPDKRVLGKTLAEHLRIAVCYWHTFVWPGHDIFGQAAFRRPWQQPGDALERARMKADAAFEFFTKLGTPFYTFHDTDVAPEGDSLREYAANFARMVDYLGERQQASGVRLLWGTANLFSHPRFAAGAATNPNPDVFAWAATQVCHALDATHRLGGENYVLWGGREGYETLLNTDLKRERDQFARFLSMVVEHKHRIGFKGALLIEPKPQEPTKHQYDYDVATVHGFLVQYGLQNEIRVNIEANHATLAGHSFHHEIANAFALGVFGSVDANRGDPQNGWDTDQFPNSVEELTLAFYEILRHGGFTTGGMNFDAKVRRQSIDPEDLFYGHVGAIDVLALALERAAVLVENDRLDALRRQRYAQWDDAFGRKILAGGYTLESLAADALARGVDPQHASGAQERLENIVNQAIYGLR.

Active-site residues include H100 and D103. The Mg(2+) site is built by E231, E267, H270, D295, D306, D308, and D338.

It belongs to the xylose isomerase family. As to quaternary structure, homotetramer. Requires Mg(2+) as cofactor.

The protein resides in the cytoplasm. It catalyses the reaction alpha-D-xylose = alpha-D-xylulofuranose. The protein is Xylose isomerase of Burkholderia cenocepacia (strain ATCC BAA-245 / DSM 16553 / LMG 16656 / NCTC 13227 / J2315 / CF5610) (Burkholderia cepacia (strain J2315)).